The following is a 339-amino-acid chain: Anthranilate phosphoribosyltransferase (339 aa).

Residues Gly-80, 83-84 (GD), Thr-88, 90-93 (NIST), 108-116 (KHGNRSVSS), and Ser-120 each bind 5-phospho-alpha-D-ribose 1-diphosphate. Position 80 (Gly-80) interacts with anthranilate. Ser-92 is a Mg(2+) binding site. Asn-111 contacts anthranilate. Residue Arg-166 participates in anthranilate binding. Mg(2+) is bound by residues Asp-225 and Glu-226.

The protein belongs to the anthranilate phosphoribosyltransferase family. In terms of assembly, homodimer. Requires Mg(2+) as cofactor.

It catalyses the reaction N-(5-phospho-beta-D-ribosyl)anthranilate + diphosphate = 5-phospho-alpha-D-ribose 1-diphosphate + anthranilate. It functions in the pathway amino-acid biosynthesis; L-tryptophan biosynthesis; L-tryptophan from chorismate: step 2/5. Functionally, catalyzes the transfer of the phosphoribosyl group of 5-phosphorylribose-1-pyrophosphate (PRPP) to anthranilate to yield N-(5'-phosphoribosyl)-anthranilate (PRA). This Alkaliphilus metalliredigens (strain QYMF) protein is Anthranilate phosphoribosyltransferase.